The chain runs to 174 residues: Large ribosomal subunit protein uL10 (174 aa).

It belongs to the universal ribosomal protein uL10 family. As to quaternary structure, part of the ribosomal stalk of the 50S ribosomal subunit. The N-terminus interacts with L11 and the large rRNA to form the base of the stalk. The C-terminus forms an elongated spine to which L12 dimers bind in a sequential fashion forming a multimeric L10(L12)X complex.

In terms of biological role, forms part of the ribosomal stalk, playing a central role in the interaction of the ribosome with GTP-bound translation factors. The protein is Large ribosomal subunit protein uL10 of Desulfovibrio desulfuricans (strain ATCC 27774 / DSM 6949 / MB).